A 177-amino-acid chain; its full sequence is ATP synthase subunit delta (177 aa).

It belongs to the ATPase delta chain family. F-type ATPases have 2 components, F(1) - the catalytic core - and F(0) - the membrane proton channel. F(1) has five subunits: alpha(3), beta(3), gamma(1), delta(1), epsilon(1). F(0) has three main subunits: a(1), b(2) and c(10-14). The alpha and beta chains form an alternating ring which encloses part of the gamma chain. F(1) is attached to F(0) by a central stalk formed by the gamma and epsilon chains, while a peripheral stalk is formed by the delta and b chains.

Its subcellular location is the cell inner membrane. Functionally, f(1)F(0) ATP synthase produces ATP from ADP in the presence of a proton or sodium gradient. F-type ATPases consist of two structural domains, F(1) containing the extramembraneous catalytic core and F(0) containing the membrane proton channel, linked together by a central stalk and a peripheral stalk. During catalysis, ATP synthesis in the catalytic domain of F(1) is coupled via a rotary mechanism of the central stalk subunits to proton translocation. Its function is as follows. This protein is part of the stalk that links CF(0) to CF(1). It either transmits conformational changes from CF(0) to CF(1) or is implicated in proton conduction. In Neisseria gonorrhoeae (strain NCCP11945), this protein is ATP synthase subunit delta.